The chain runs to 356 residues: Phosphate acyltransferase (356 aa).

Belongs to the PlsX family. In terms of assembly, homodimer. Probably interacts with PlsY.

It is found in the cytoplasm. It catalyses the reaction a fatty acyl-[ACP] + phosphate = an acyl phosphate + holo-[ACP]. It participates in lipid metabolism; phospholipid metabolism. Catalyzes the reversible formation of acyl-phosphate (acyl-PO(4)) from acyl-[acyl-carrier-protein] (acyl-ACP). This enzyme utilizes acyl-ACP as fatty acyl donor, but not acyl-CoA. This chain is Phosphate acyltransferase, found in Xanthobacter autotrophicus (strain ATCC BAA-1158 / Py2).